Consider the following 66-residue polypeptide: Ribosome biogenesis protein Nop10 (66 aa).

Belongs to the NOP10 family.

Involved in ribosome biogenesis; more specifically in 18S rRNA pseudouridylation and in cleavage of pre-rRNA. The sequence is that of Ribosome biogenesis protein Nop10 from Desulfurococcus amylolyticus (strain DSM 18924 / JCM 16383 / VKM B-2413 / 1221n) (Desulfurococcus kamchatkensis).